The chain runs to 237 residues: tRNA1(Val) (adenine(37)-N6)-methyltransferase (237 aa).

Belongs to the methyltransferase superfamily. tRNA (adenine-N(6)-)-methyltransferase family.

Its subcellular location is the cytoplasm. It carries out the reaction adenosine(37) in tRNA1(Val) + S-adenosyl-L-methionine = N(6)-methyladenosine(37) in tRNA1(Val) + S-adenosyl-L-homocysteine + H(+). Specifically methylates the adenine in position 37 of tRNA(1)(Val) (anticodon cmo5UAC). This is tRNA1(Val) (adenine(37)-N6)-methyltransferase from Bacteroides fragilis (strain ATCC 25285 / DSM 2151 / CCUG 4856 / JCM 11019 / LMG 10263 / NCTC 9343 / Onslow / VPI 2553 / EN-2).